A 338-amino-acid chain; its full sequence is Serpentine receptor class alpha-31 (338 aa).

7 consecutive transmembrane segments (helical) span residues 23–43 (GNHC…VFAI), 59–79 (LLFS…GIRI), 108–125 (LYYY…SLFF), 142–162 (FSKI…YWIF), 188–208 (VNEF…VIFF), 240–260 (VCII…TTEI), and 276–296 (SIAF…IIIY).

The protein belongs to the nematode receptor-like protein sra family.

Its subcellular location is the membrane. This is Serpentine receptor class alpha-31 (sra-31) from Caenorhabditis elegans.